The following is a 321-amino-acid chain: Probable arabinan endo-1,5-alpha-L-arabinosidase C (321 aa).

The signal sequence occupies residues 1 to 18 (MYLYTLILLFLASANVNA). Catalysis depends on Asp-33, which acts as the Proton acceptor. Asn-192 is a glycosylation site (N-linked (GlcNAc...) asparagine). Glu-200 functions as the Proton donor in the catalytic mechanism. The N-linked (GlcNAc...) asparagine glycan is linked to Asn-224.

This sequence belongs to the glycosyl hydrolase 43 family.

It localises to the secreted. The enzyme catalyses Endohydrolysis of (1-&gt;5)-alpha-arabinofuranosidic linkages in (1-&gt;5)-arabinans.. The protein operates within glycan metabolism; L-arabinan degradation. Its function is as follows. Endo-1,5-alpha-L-arabinanase involved in degradation of pectin. Its preferred substrate is linear 1,5-alpha-L-arabinan. In Aspergillus fumigatus (strain ATCC MYA-4609 / CBS 101355 / FGSC A1100 / Af293) (Neosartorya fumigata), this protein is Probable arabinan endo-1,5-alpha-L-arabinosidase C (abnC).